The chain runs to 814 residues: MEFILGIFCVIFCLRAGAGFGVDPSLQIDIFEDFQLGEATPGVQQVQGFHNRSKAFLFQDTSRSIKASAETAERIFTKLRNKHEFTILVTLKQAMLNSGVILSIHHADHRYLELESSGHRNEVRLHYRSGSHRSQTEVFPYILADDKWHRFSIAISASHLVLHIDCNKIYERIVEKTFMDVPPGTALWVGQRNNVHGYFKGIMQDLQIVVMPQGFISQCPDLNRTCPTCNDFHGLVQKIMELQDILAKTSAKLSRAEQRMNRLDQCYCERSCTVKGNIYRELESWMDGCKKCTCTNGTAQCETLTCSVPNCLSGFAPAYVPGKCCKECQPVCMYQGQMYFEGEQEAVQSSSGACVLFQCKSNTMQRIESPECLPLNCPQSQHITLRSGCCKVCKGHDFCSEGHNCVEYSICKNLNDKAVCICRDGFRALREDSAYCEDIDECTEGRHYCRENTVCVNTPGSFMCVCQTGYLKIDDYSCTEHNECATNQHSCDENAVCYNTVGGHNCVCQPGYTGNGTVCKAFCTDGCRNGGTCIAPNICACPQGFTGPSCEADIDECTEGFVQCDSRANCINLPGWYHCECRDGYHDNGMFSLSGESCEDIDECATGRHSCSNDTVCFNLDGGFDCRCPHGKNCSGDCTHEGKIKHNGQIWVLENDRCSVCSCQVGLVMCRRMVCDCENPTVDLFCCPECDPRLSSQCLHQSGELTYKSGDTWVQNCQQCRCLQGEVDCWPLPCPEIDCEFSVVPESECCPRCISDPCQADIIRNDITKTCVDETNVVRFTGSSWIKHGTECTLCQCKNGHMCCSVDPQCLQEL.

Residues 1–19 (MEFILGIFCVIFCLRAGAG) form the signal peptide. N-linked (GlcNAc...) asparagine glycans are attached at residues Asn51, Asn223, and Asn296. Residues 53–226 (SKAFLFQDTS…SQCPDLNRTC (174 aa)) enclose the Laminin G-like domain. The region spanning 270–329 (RSCTVKGNIYRELESWMDGCKKCTCTNGTAQCETLTCSVPNCLSGFAPAYVPGKCCKECQ) is the VWFC 1 domain. The EGF-like 1 domain maps to 395–437 (GHDFCSEGHNCVEYSICKNLNDKAVCICRDGFRALREDSAYCE). 3 disulfides stabilise this stretch: Cys399–Cys411, Cys405–Cys420, and Cys422–Cys436. Asp438, Ile439, and Glu441 together coordinate Ca(2+). The 42-residue stretch at 438-479 (DIDECTEGRHYCRENTVCVNTPGSFMCVCQTGYLKIDDYSCT) folds into the EGF-like 2; calcium-binding domain. Intrachain disulfides connect Cys442/Cys455, Cys449/Cys464, Cys466/Cys478, Cys484/Cys497, Cys491/Cys506, Cys508/Cys519, Cys523/Cys533, Cys527/Cys539, and Cys541/Cys550. Ca(2+) is bound by residues Asn457, Thr458, and Ser461. One can recognise an EGF-like 3; calcium-binding domain in the interval 480-520 (EHNECATNQHSCDENAVCYNTVGGHNCVCQPGYTGNGTVCK). Asn515 carries N-linked (GlcNAc...) asparagine glycosylation. The region spanning 521–551 (AFCTDGCRNGGTCIAPNICACPQGFTGPSCE) is the EGF-like 4 domain. Ca(2+)-binding residues include Asp553, Ile554, and Glu556. Positions 553-599 (DIDECTEGFVQCDSRANCINLPGWYHCECRDGYHDNGMFSLSGESCE) constitute an EGF-like 5; calcium-binding domain. Cystine bridges form between Cys557–Cys570, Cys564–Cys579, and Cys581–Cys598. Positions 572, 573, and 576 each coordinate Ca(2+). Asp600, Ile601, and Glu603 together coordinate Ca(2+). An EGF-like 6; calcium-binding domain is found at 600-635 (DIDECATGRHSCSNDTVCFNLDGGFDCRCPHGKNCS). 3 disulfides stabilise this stretch: Cys604-Cys617, Cys611-Cys626, and Cys628-Cys634. Residue Asn613 is glycosylated (N-linked (GlcNAc...) asparagine). Ca(2+) contacts are provided by Asn619, Leu620, and Gly623. Asn633 is a glycosylation site (N-linked (GlcNAc...) asparagine). VWFC domains are found at residues 636–691 (GDCT…PECD) and 696–754 (SQCL…PRCI).

As to quaternary structure, homotrimer.

The protein resides in the secreted. Functionally, may regulate neuronal differentiation, polarization and axon guidance. This Xenopus tropicalis (Western clawed frog) protein is Protein kinase C-binding protein NELL2 (nell2).